A 486-amino-acid polypeptide reads, in one-letter code: Aspartyl/glutamyl-tRNA(Asn/Gln) amidotransferase subunit B (486 aa).

It belongs to the GatB/GatE family. GatB subfamily. In terms of assembly, heterotrimer of A, B and C subunits.

It catalyses the reaction L-glutamyl-tRNA(Gln) + L-glutamine + ATP + H2O = L-glutaminyl-tRNA(Gln) + L-glutamate + ADP + phosphate + H(+). It carries out the reaction L-aspartyl-tRNA(Asn) + L-glutamine + ATP + H2O = L-asparaginyl-tRNA(Asn) + L-glutamate + ADP + phosphate + 2 H(+). Allows the formation of correctly charged Asn-tRNA(Asn) or Gln-tRNA(Gln) through the transamidation of misacylated Asp-tRNA(Asn) or Glu-tRNA(Gln) in organisms which lack either or both of asparaginyl-tRNA or glutaminyl-tRNA synthetases. The reaction takes place in the presence of glutamine and ATP through an activated phospho-Asp-tRNA(Asn) or phospho-Glu-tRNA(Gln). The protein is Aspartyl/glutamyl-tRNA(Asn/Gln) amidotransferase subunit B of Orientia tsutsugamushi (strain Boryong) (Rickettsia tsutsugamushi).